Reading from the N-terminus, the 382-residue chain is uncharacterized protein (382 aa).

12 helical membrane passes run 8–28 (VLLLLCGLLLLTLAIAVLNTL), 39–61 (PTWQVGMVSSSYFTGNLLGTLLT), 75–95 (YLASLIFAAGCVGLGLMVGFW), 102–122 (FIAGVGCAMIWVVVESALMCS), 131–151 (LLAAYMMVYYVGTVLGQLMIS), 157–177 (LMSVLPWVTGMVLAAILPLLF), 204–224 (LGVNGCIISGIVLGSLYGLMP), 236–256 (GIGFWMAVMVSAGIVGQWPIG), 265–284 (LLVLRVQVFVVILGCLAMLG), 289–311 (APALFILGAAGFTLYPVAMAWAC), 325–345 (ALLLSYTIGSLLGPTFTAMLM), and 349–369 (SDNLLFIMIASVAFIYLLMLL).

This sequence belongs to the major facilitator superfamily. YcaD (TC 2.A.1.26) family.

The protein resides in the cell inner membrane. This is an uncharacterized protein from Enterobacter sp. (strain 638).